We begin with the raw amino-acid sequence, 198 residues long: Putative Do-like 15 protein (198 aa).

A serine protease region spans residues 48–198 (KIFSFSREPN…VFENDSPSDK (151 aa)). Catalysis depends on charge relay system residues His86 and Ser175.

It belongs to the peptidase S1B family.

This chain is Putative Do-like 15 protein (DEGP15), found in Arabidopsis thaliana (Mouse-ear cress).